Consider the following 1038-residue polypeptide: Kinesin-like protein KIF17 (1038 aa).

The 331-residue stretch at 5-335 (SVKVVVRCRP…LRYANRAKNI (331 aa)) folds into the Kinesin motor domain. Residue 91 to 98 (GQTGSGKS) coordinates ATP. A coiled-coil region spans residues 346–470 (KDALLREYQE…ETEAILKAEV (125 aa)). Disordered stretches follow at residues 379–401 (TQTP…VQQD), 503–559 (LSMP…GPEE), and 636–657 (DSSQ…LLEP). 2 stretches are compositionally biased toward polar residues: residues 533 to 551 (SEFS…SATS) and 636 to 651 (DSSQ…QPSS). Positions 748–855 (QQVLARLQLL…QLEKIDYLAT (108 aa)) form a coiled coil. Disordered regions lie at residues 916–940 (VVPT…PHMQ) and 976–1038 (MKSL…GEPL). The segment covering 983 to 1000 (NSPPGLNSSLSNNSALPP) has biased composition (low complexity).

The protein belongs to the TRAFAC class myosin-kinesin ATPase superfamily. Kinesin family. In terms of assembly, homodimer. Interacts with APBA1 (via PDZ domain); the interaction is direct and is required for association of KIF17 with the cargo that is to be transported. Interacts with IFT B complex components IFT52 and IFT57. Interacts with IFT70B. Interacts with PIWIL1. Interacts with TBATA. As to expression, highly expressed in the gray matter of the brain, especially in the hippocampus.

Its subcellular location is the cytoplasm. It is found in the cytoskeleton. The protein resides in the cell projection. The protein localises to the cilium. It localises to the dendrite. In terms of biological role, dendrite-specific motor protein which, in association with the Apba1-containing complex (LIN-10-LIN-2-LIN-7 complex), transports vesicles containing N-methyl-D-aspartate (NMDA) receptor subunit NR2B along microtubules. The protein is Kinesin-like protein KIF17 (Kif17) of Mus musculus (Mouse).